The chain runs to 132 residues: Large ribosomal subunit protein uL22c (132 aa).

The protein belongs to the universal ribosomal protein uL22 family. As to quaternary structure, part of the 50S ribosomal subunit.

It is found in the plastid. The protein localises to the chloroplast. This protein binds specifically to 23S rRNA. In terms of biological role, the globular domain of the protein is located near the polypeptide exit tunnel on the outside of the subunit, while an extended beta-hairpin is found that lines the wall of the exit tunnel in the center of the 70S ribosome. The chain is Large ribosomal subunit protein uL22c (rpl22) from Staurastrum punctulatum (Green alga).